We begin with the raw amino-acid sequence, 843 residues long: Complement component C7 (843 aa).

The first 22 residues, 1–22 (MKVISLFILVGFIGEFQSFSSA), serve as a signal peptide directing secretion. One can recognise a TSP type-1 1 domain in the interval 27-80 (NCQWDFYAPWSECNGCTKTQTRRRSVAVYGQYGGQPCVGNAFETQSCEPTRGCP). 7 disulfide bridges follow: Cys-28-Cys-63, Cys-39-Cys-73, Cys-42-Cys-79, Cys-85-Cys-96, Cys-91-Cys-109, Cys-103-Cys-119, and Cys-128-Cys-165. Trp-36 carries a C-linked (Man) tryptophan glycan. The LDL-receptor class A domain occupies 83-121 (EGCGERFRCFSGQCISKSLVCNGDSDCDEDSADEDRCED). The segment covering 108–120 (DCDEDSADEDRCE) has biased composition (acidic residues). Residues 108 to 143 (DCDEDSADEDRCEDSERRPSCDIDKPPPNIELTGNG) are disordered. The span at 121–132 (DSERRPSCDIDK) shows a compositional bias: basic and acidic residues. Residues 124-456 (RRPSCDIDKP…EYLDEFDPCH (333 aa)) enclose the MACPF domain. N-linked (GlcNAc...) asparagine glycosylation occurs at Asn-202. A disordered region spans residues 219 to 240 (SRKRSFFRSSSSSSRSYTSHTN). Low complexity predominate over residues 225 to 234 (FRSSSSSSRS). 12 cysteine pairs are disulfide-bonded: Cys-337/Cys-353, Cys-433/Cys-560, Cys-455/Cys-505, Cys-457/Cys-473, Cys-460/Cys-475, Cys-477/Cys-486, Cys-512/Cys-545, Cys-523/Cys-535, Cys-571/Cys-613, Cys-599/Cys-626, Cys-631/Cys-673, and Cys-659/Cys-688. The EGF-like domain maps to 457 to 487 (CRPCQNGGLATVEGTHCLCHCKPYTFGAACE). The 50-residue stretch at 500-549 (DGGWSCWSSWSPCVQGKKTRSRECNNPPPSGGGRSCVGETTESTQCEDEE) folds into the TSP type-1 2 domain. Residues Trp-503, Trp-506, and Trp-509 are each glycosylated (C-linked (Man) tryptophan; partial). The segment at 516-538 (KKTRSRECNNPPPSGGGRSCVGE) is disordered. CCP stretches follow at residues 545 to 615 (CEDE…RCGE) and 616 to 693 (DLRW…QKEN). 2 consecutive Sushi domains span residues 569 to 628 (EFCP…HCQK) and 629 to 690 (IACV…RCVQ). Factor I module (FIM) regions lie at residues 695–770 (LTQA…ASAE) and 771–843 (KACG…AETQ). O-linked (GalNAc...) threonine glycosylation is present at Thr-696. Intrachain disulfides connect Cys-702–Cys-713, Cys-715–Cys-750, Cys-721–Cys-743, Cys-728–Cys-763, Cys-773–Cys-782, Cys-776–Cys-789, Cys-791–Cys-825, Cys-797–Cys-818, and Cys-805–Cys-838. Asn-754 carries an N-linked (GlcNAc...) (complex) asparagine glycan.

Belongs to the complement C6/C7/C8/C9 family. In terms of assembly, monomer or dimer; as a C5b-7 complex it can also form multimeric rosettes. Component of the membrane attack complex (MAC), composed of complement C5b, C6, C7, C8A, C8B, C8G and multiple copies of the pore-forming subunit C9. In terms of processing, C-, N- and O-glycosylated. O-glycosylated with core 1 or possibly core 8 glycans.

The protein resides in the secreted. The protein localises to the target cell membrane. Membrane attack complex (MAC) assembly is inhibited by CD59, thereby protecting self-cells from damage during complement activation. MAC assembly is also inhibited by clusterin (CLU) chaperones that inhibit polymerization of C9. Functionally, component of the membrane attack complex (MAC), a multiprotein complex activated by the complement cascade, which inserts into a target cell membrane and forms a pore, leading to target cell membrane rupture and cell lysis. The MAC is initiated by proteolytic cleavage of C5 into complement C5b in response to the classical, alternative, lectin and GZMK complement pathways. The complement pathways consist in a cascade of proteins that leads to phagocytosis and breakdown of pathogens and signaling that strengthens the adaptive immune system. C7 serves as a membrane anchor. During MAC assembly, associates with C5b and C6 to form the C5b-7 complex, a key lipophilic precursor of the MAC complex, which associates with the outer leaflet and reduces the energy for membrane bending. In Homo sapiens (Human), this protein is Complement component C7.